The sequence spans 447 residues: Probable glycine dehydrogenase (decarboxylating) subunit 1 (447 aa).

This sequence belongs to the GcvP family. N-terminal subunit subfamily. The glycine cleavage system is composed of four proteins: P, T, L and H. In this organism, the P 'protein' is a heterodimer of two subunits.

It catalyses the reaction N(6)-[(R)-lipoyl]-L-lysyl-[glycine-cleavage complex H protein] + glycine + H(+) = N(6)-[(R)-S(8)-aminomethyldihydrolipoyl]-L-lysyl-[glycine-cleavage complex H protein] + CO2. Its function is as follows. The glycine cleavage system catalyzes the degradation of glycine. The P protein binds the alpha-amino group of glycine through its pyridoxal phosphate cofactor; CO(2) is released and the remaining methylamine moiety is then transferred to the lipoamide cofactor of the H protein. The protein is Probable glycine dehydrogenase (decarboxylating) subunit 1 of Beijerinckia indica subsp. indica (strain ATCC 9039 / DSM 1715 / NCIMB 8712).